The sequence spans 354 residues: Cysteine and histidine-rich domain-containing protein morgana (354 aa).

16 residues coordinate Zn(2+): cysteine 4, cysteine 9, cysteine 23, histidine 26, cysteine 41, cysteine 42, cysteine 58, histidine 63, cysteine 140, cysteine 145, cysteine 159, histidine 162, cysteine 177, cysteine 178, cysteine 194, and histidine 199. CHORD domains lie at 4–63 (CYNR…LAKH) and 140–199 (CKNN…YGEH). The CS domain occupies 210 to 301 (VVQCRYDWHQ…LEPGSWSNLN (92 aa)). A phosphoserine mark is found at serine 324 and serine 339.

As to quaternary structure, interacts with Hsp83.

The protein localises to the cytoplasm. It is found in the nucleus. Its subcellular location is the cytoskeleton. It localises to the spindle. In terms of biological role, regulates centrosome duplication and mitotic spindle dynamics. Also involved in controlling the size of dendritic arbors. May act as co-chaperone for Hsp83. During mitotic spindle assembly, regulates microtubule (MT) dynamics by binding to MTs and promoting MT polymerisation. Promotes the elongation and retraction of terminal branches in response to changes in body size, possibly acting downstream of the TORC2 pathway to enable proportional scaling of dendritic arbors. The polypeptide is Cysteine and histidine-rich domain-containing protein morgana (Drosophila melanogaster (Fruit fly)).